A 391-amino-acid chain; its full sequence is Immediate-early protein 2 (391 aa).

Belongs to the herpesviridae US22 family.

It is found in the host cytoplasm. Its subcellular location is the host nucleus. Involved in the reactivation of latent MCMV in spleen cells. The chain is Immediate-early protein 2 (IE2) from Murid herpesvirus 1 (strain Smith) (MuHV-1).